The chain runs to 377 residues: Tryptophan 2,3-dioxygenase (377 aa).

Substrate is bound by residues 57–61 (FIITH) and arginine 128. Histidine 313 lines the heme pocket. Residue threonine 328 participates in substrate binding.

This sequence belongs to the tryptophan 2,3-dioxygenase family. In terms of assembly, homotetramer. Dimer of dimers. Heme is required as a cofactor.

The enzyme catalyses L-tryptophan + O2 = N-formyl-L-kynurenine. The protein operates within amino-acid degradation; L-tryptophan degradation via kynurenine pathway; L-kynurenine from L-tryptophan: step 1/2. It functions in the pathway pigment biosynthesis; ommochrome biosynthesis. Heme-dependent dioxygenase that catalyzes the oxidative cleavage of the L-tryptophan (L-Trp) pyrrole ring and converts L-tryptophan to N-formyl-L-kynurenine. Catalyzes the oxidative cleavage of the indole moiety. The chain is Tryptophan 2,3-dioxygenase from Drosophila grimshawi (Hawaiian fruit fly).